The chain runs to 485 residues: Protein hunchback (485 aa).

A disordered region spans residues 1-77 (TSSTARKTPE…EEDDDIRTPK (77 aa)). Residues 16 to 37 (QDQNQLLKTPIQTNGNQQSTFD) show a composition bias toward polar residues. Residues 59-72 (ADVDDENDAEEDDD) show a composition bias toward acidic residues. 4 consecutive C2H2-type zinc fingers follow at residues 87 to 109 (YKCK…NRIH), 116 to 138 (LKCQ…LRNH), 144 to 166 (FQCK…MKSH), and 172 to 196 (YRCK…KYSH). Disordered stretches follow at residues 229 to 270 (KDEG…PPSS), 318 to 361 (NGWQ…QVKH), and 398 to 422 (PKPV…EDDS). Residues 257–270 (NFEQSQHVPTPPSS) are compositionally biased toward polar residues. Positions 325-335 (NCNEEETPEKE) are enriched in acidic residues. The segment covering 345 to 358 (DLSSNPSTPSTVSQ) has biased composition (polar residues). The span at 402-416 (QLQLPTSSTTTPLKT) shows a compositional bias: low complexity. 2 consecutive C2H2-type zinc fingers follow at residues 432–454 (YECK…MGYH) and 460–484 (FKCN…RDAH).

The protein belongs to the hunchback C2H2-type zinc-finger protein family.

Its subcellular location is the nucleus. Functionally, gap class segmentation protein that controls development of head structures. In Clogmia albipunctata (Mothmidge), this protein is Protein hunchback (hb).